Reading from the N-terminus, the 428-residue chain is PGL/p-HBAD biosynthesis glycosyltransferase MRA_2985 (428 aa).

The segment at Met-1–Ala-23 is disordered.

The protein belongs to the UDP-glycosyltransferase family.

In terms of biological role, involved in glycosylation steps downstream of mono-O-methyl-glycosyl-p-hydroxybenzoic acid derivative (p-HBAD I) and 2-O-methyl-rhamnosyl-phenolphthiocerol dimycocerosate (mycoside B) during the p-hydroxybenzoic acid derivatives (p-HBAD) and glycosylated phenolphthiocerol dimycocerosates (PGL) biosynthesis. This chain is PGL/p-HBAD biosynthesis glycosyltransferase MRA_2985, found in Mycobacterium tuberculosis (strain ATCC 25177 / H37Ra).